The primary structure comprises 265 residues: Transmembrane protein 270 (265 aa).

3 helical membrane passes run 72–92 (PLGQALWAGLALIQVPVWLVL), 130–150 (LFLSCLHGLMLVALLLVVVTW), and 185–205 (LYWWVETMTALTSWHLAYLIT). The tract at residues 229 to 265 (QEVEPQEVSGSSLLPSLSASSDSESGTVLPEQETPRE) is disordered. Positions 237-253 (SGSSLLPSLSASSDSES) are enriched in low complexity.

Its subcellular location is the membrane. In Homo sapiens (Human), this protein is Transmembrane protein 270.